We begin with the raw amino-acid sequence, 327 residues long: Tryptophan--tRNA ligase (327 aa).

ATP contacts are provided by residues Gln-9–Ser-11 and Gly-17–Asn-18. The 'HIGH' region signature appears at Pro-10 to Asn-18. Asp-132 is an L-tryptophan binding site. ATP-binding positions include Gly-144 to Asp-146, Ile-183, and Lys-192 to Ser-196. The short motif at Lys-192–Ser-196 is the 'KMSKS' region element.

It belongs to the class-I aminoacyl-tRNA synthetase family. Homodimer.

Its subcellular location is the cytoplasm. The catalysed reaction is tRNA(Trp) + L-tryptophan + ATP = L-tryptophyl-tRNA(Trp) + AMP + diphosphate + H(+). In terms of biological role, catalyzes the attachment of tryptophan to tRNA(Trp). This chain is Tryptophan--tRNA ligase, found in Oceanobacillus iheyensis (strain DSM 14371 / CIP 107618 / JCM 11309 / KCTC 3954 / HTE831).